Here is a 1548-residue protein sequence, read N- to C-terminus: Zinc finger MYM-type protein 4 (1548 aa).

An N-acetylalanine modification is found at A2. T107 carries the post-translational modification Phosphothreonine. S110 and S122 each carry phosphoserine. Residues K140 and K149 each participate in a glycyl lysine isopeptide (Lys-Gly) (interchain with G-Cter in SUMO2) cross-link. S162 carries the phosphoserine modification. The interval 162-189 (SKETFSGKEKNRDLTYEREKRLDKPHKD) is disordered. K195 participates in a covalent cross-link: Glycyl lysine isopeptide (Lys-Gly) (interchain with G-Cter in SUMO2). S197 carries the post-translational modification Phosphoserine. Residues K201 and K232 each participate in a glycyl lysine isopeptide (Lys-Gly) (interchain with G-Cter in SUMO2) cross-link. The residue at position 242 (S242) is a Phosphoserine. Residue K250 forms a Glycyl lysine isopeptide (Lys-Gly) (interchain with G-Cter in SUMO1); alternate linkage. K250 is covalently cross-linked (Glycyl lysine isopeptide (Lys-Gly) (interchain with G-Cter in SUMO2); alternate). Glycyl lysine isopeptide (Lys-Gly) (interchain with G-Cter in SUMO2) cross-links involve residues K260, K271, K273, K289, K327, K400, K428, and K430. 9 consecutive MYM-type zinc fingers follow at residues 362–402 (QLFC…PKDV), 414–457 (KDFC…RHEV), 464–499 (HKLC…GSGQ), 510–544 (KKFC…AEMI), 554–592 (ELFC…QYHL), 600–631 (RNFC…LSQG), 708–742 (FQFC…KETV), 749–788 (KSFC…LVQN), and 795–829 (EEFC…SESL). Position 1030 is a phosphoserine (S1030). Glycyl lysine isopeptide (Lys-Gly) (interchain with G-Cter in SUMO2) cross-links involve residues K1035 and K1061. 2 positions are modified to phosphoserine: S1064 and S1071. Glycyl lysine isopeptide (Lys-Gly) (interchain with G-Cter in SUMO2) cross-links involve residues K1080 and K1127. Over residues 1124-1134 (SELKQFSKGET) the composition is skewed to basic and acidic residues. Disordered regions lie at residues 1124–1183 (SELK…KSIV) and 1231–1260 (KCGG…QESS). Positions 1160–1181 (SRTRRRHRDGFPQPRRRGRKKS) are enriched in basic residues. Residues S1181 and S1256 each carry the phosphoserine modification. A compositionally biased stretch (polar residues) spans 1237-1260 (QASSSPRSDPLGSTQDHALSQESS). K1431 is covalently cross-linked (Glycyl lysine isopeptide (Lys-Gly) (interchain with G-Cter in SUMO2)). Phosphoserine occurs at positions 1539, 1542, and 1547.

Expressed at higher level in heart, skeletal muscle, kidney and liver.

Functionally, plays a role in the regulation of cell morphology and cytoskeletal organization. This is Zinc finger MYM-type protein 4 (ZMYM4) from Homo sapiens (Human).